A 245-amino-acid chain; its full sequence is MTIRILAEGLAFRYGSKGPNIIHDVSFSVYDGDFIGIIGPNGGGKSTLTMLILGLLTPTFGSLKTFPSHSAGKQTHSMIGWVPQHFSYDPCFPISVKDVVLSGRLSQLSWHGKYKKKDFEAVDHALDLVGLSDHHHHCFAHLSGGQIQRVLLARALASYPEILILDEPTTNIDPDNQQRILSILKKLNRTCTILMVTHDLHHTTNYFNKVFYMNKTLTSLADTSTLTDQFCCHPYKNQEFSCSPH.

The ABC transporter domain maps to 5–240; that stretch reads ILAEGLAFRY…CCHPYKNQEF (236 aa). 39 to 46 contributes to the ATP binding site; sequence GPNGGGKS.

It belongs to the ABC transporter superfamily.

It localises to the cell inner membrane. In terms of biological role, part of an ATP-driven transport system CPn0541/CPn0542/CPn0543 for a metal. Probably responsible for energy coupling to the transport system. This Chlamydia pneumoniae (Chlamydophila pneumoniae) protein is Probable metal transport system ATP-binding protein CPn_0542/CP_0210/CPj0542/CpB0563.